The primary structure comprises 123 residues: SGSCTTKTCWTTLPKFRELGYVLKDKYNEAVQVEPVRASRNKRPTFLKIKKPLSYLKPMDTDLVYIEKSPNYCEEDPVTGSVGTQGRMCNKTAQHSSGCDLMCCGRGYNTHQYSRVWKCNCKF.

The O-palmitoleoyl serine; by PORCN moiety is linked to residue serine 1. Residues 33–61 (VEPVRASRNKRPTFLKIKKPLSYLKPMDT) are disordered linker. Cysteine 89 and cysteine 104 are joined by a disulfide. An N-linked (GlcNAc...) asparagine glycan is attached at asparagine 90.

Belongs to the Wnt family. Palmitoleoylation is required for efficient binding to frizzled receptors. Depalmitoleoylation leads to Wnt signaling pathway inhibition.

Its subcellular location is the secreted. The protein localises to the extracellular space. The protein resides in the extracellular matrix. Its function is as follows. Ligand for members of the frizzled family of seven transmembrane receptors that functions in the canonical Wnt/beta-catenin signaling pathway. Plays an important role in embryonic development, including dorsal versus ventral patterning during limb development, skeleton development and urogenital tract development. Required for central nervous system (CNS) angiogenesis and blood-brain barrier regulation. The polypeptide is Protein Wnt-7a (WNT-7A) (Plethodon jordani (Red-cheeked salamander)).